We begin with the raw amino-acid sequence, 321 residues long: ATP-dependent 6-phosphofructokinase (321 aa).

Residue G12 coordinates ATP. ADP-binding positions include 22 to 26 (RGVVR) and 55 to 60 (RYSVSD). ATP-binding positions include 73–74 (RF) and 103–106 (GDGS). D104 is a binding site for Mg(2+). Residue 127–129 (TID) coordinates substrate. Catalysis depends on D129, which acts as the Proton acceptor. R156 contributes to the ADP binding site. Residues R164 and 171–173 (MGR) each bind substrate. ADP-binding positions include 187-189 (GCE), K213, and 215-217 (KRH). Residues E224, R245, and 251–254 (HIQR) each bind substrate.

This sequence belongs to the phosphofructokinase type A (PFKA) family. ATP-dependent PFK group I subfamily. Prokaryotic clade 'B1' sub-subfamily. Homotetramer. It depends on Mg(2+) as a cofactor.

The protein resides in the cytoplasm. The enzyme catalyses beta-D-fructose 6-phosphate + ATP = beta-D-fructose 1,6-bisphosphate + ADP + H(+). It participates in carbohydrate degradation; glycolysis; D-glyceraldehyde 3-phosphate and glycerone phosphate from D-glucose: step 3/4. Its activity is regulated as follows. Allosterically activated by ADP and other diphosphonucleosides, and allosterically inhibited by phosphoenolpyruvate. Functionally, catalyzes the phosphorylation of D-fructose 6-phosphate to fructose 1,6-bisphosphate by ATP, the first committing step of glycolysis. The chain is ATP-dependent 6-phosphofructokinase from Histophilus somni (strain 129Pt) (Haemophilus somnus).